Here is a 111-residue protein sequence, read N- to C-terminus: Secreted RxLR effector protein 81 (111 aa).

The first 16 residues, 1 to 16 (MLVSMLLIIFPNGVSL), serve as a signal peptide directing secretion. N-linked (GlcNAc...) asparagine glycosylation is present at Asn52. Positions 73–92 (KKFSSSDEDKSRDVRRRLRP) are disordered. The short motif at 88 to 91 (RRLR) is the RxLR-dEER element.

It belongs to the RxLR effector family.

Its subcellular location is the secreted. The protein localises to the host nucleus. It localises to the host cytoplasm. Its function is as follows. Secreted effector that partially suppresses the host cell death induced by cell death-inducing proteins. The chain is Secreted RxLR effector protein 81 from Plasmopara viticola (Downy mildew of grapevine).